We begin with the raw amino-acid sequence, 740 residues long: DNA polymerase iota (740 aa).

Residues 1–21 are disordered; the sequence is MEKLGVEPEEEGGGDDDEEDA. Over residues 7 to 21 the composition is skewed to acidic residues; that stretch reads EPEEEGGGDDDEEDA. Residues 55 to 268 form the UmuC domain; it reads IVHVDLDCFY…NHIKEIPGIG (214 aa). The Mg(2+) site is built by Asp59 and Leu60. 2 residues coordinate Mn(2+): Asp59 and Leu60. Positions 64 and 96 each coordinate a 2'-deoxyribonucleoside 5'-triphosphate. Residue Asp151 coordinates Mg(2+). Asp151 lines the Mn(2+) pocket. The Proton acceptor role is filled by Glu152. 2 DNA-binding regions span residues 249–314 and 325–439; these read ESCQ…FGED and QSFS…CNLK. Residues 527-544 carry the Ubiquitin-binding 1 (UBM1) motif; that stretch reads VDQEVFKQLPVDIQEEIL. Disordered stretches follow at residues 581-615 and 671-704; these read PINPRDHLSSSKQVSSVSPCEPGTSGFNSSSSSYM and NHTTDSHKQTVATDSHEGLTENREPDSVDEKITF. The segment covering 605 to 615 has biased composition (low complexity); that stretch reads SGFNSSSSSYM. Basic and acidic residues predominate over residues 672-702; that stretch reads HTTDSHKQTVATDSHEGLTENREPDSVDEKI. The short motif at 708-725 is the Ubiquitin-binding 2 (UBM2) element; that stretch reads IDPQVFYELPEAVQKELL.

It belongs to the DNA polymerase type-Y family. In terms of assembly, interacts with POLH. Interacts with REV1. Interacts with ubiquitin. It depends on Mg(2+) as a cofactor. The cofactor is Mn(2+). Monoubiquitinated. Protein monoubiquitination prevents POLI binding to ubiquitin via the ubiquitin-binding motif 1 and ubiquitin-binding motif 2. In terms of tissue distribution, ubiquitous. Highly expressed in testis.

It localises to the nucleus. The enzyme catalyses DNA(n) + a 2'-deoxyribonucleoside 5'-triphosphate = DNA(n+1) + diphosphate. Its function is as follows. Error-prone DNA polymerase specifically involved in DNA repair. Plays an important role in translesion synthesis, where the normal high-fidelity DNA polymerases cannot proceed and DNA synthesis stalls. Favors Hoogsteen base-pairing in the active site. Inserts the correct base with high-fidelity opposite an adenosine template. Exhibits low fidelity and efficiency opposite a thymidine template, where it will preferentially insert guanosine. May play a role in hypermutation of immunoglobulin genes. Forms a Schiff base with 5'-deoxyribose phosphate at abasic sites, but may not have lyase activity. This is DNA polymerase iota (POLI) from Homo sapiens (Human).